The following is a 99-amino-acid chain: Large ribosomal subunit protein uL23 (99 aa).

It belongs to the universal ribosomal protein uL23 family. In terms of assembly, part of the 50S ribosomal subunit. Contacts protein L29, and trigger factor when it is bound to the ribosome.

Functionally, one of the early assembly proteins it binds 23S rRNA. One of the proteins that surrounds the polypeptide exit tunnel on the outside of the ribosome. Forms the main docking site for trigger factor binding to the ribosome. The chain is Large ribosomal subunit protein uL23 from Xanthomonas campestris pv. campestris (strain B100).